Consider the following 364-residue polypeptide: Protein PROCA1 (364 aa).

Over residues Leu172 to Glu182 the composition is skewed to acidic residues. Positions Leu172–Ser364 are disordered. The segment covering Ser203–Pro223 has biased composition (polar residues). Residues Val232–Glu241 show a composition bias toward basic residues. Basic and acidic residues predominate over residues Lys242 to Ala253. The span at Lys254–Pro270 shows a compositional bias: basic residues. Phosphoserine occurs at positions 276, 308, 318, 319, 355, and 364.

The protein belongs to the PROCA1 family. High expressed in testis.

The polypeptide is Protein PROCA1 (PROCA1) (Homo sapiens (Human)).